A 429-amino-acid polypeptide reads, in one-letter code: Adenylosuccinate synthetase (429 aa).

GTP-binding positions include 12-18 (GDEGKGK) and 40-42 (GHT). The active-site Proton acceptor is the aspartate 13. Positions 13 and 40 each coordinate Mg(2+). IMP is bound by residues 13-16 (DEGK), 38-41 (NAGH), threonine 128, arginine 142, glutamine 223, threonine 238, and arginine 302. The active-site Proton donor is histidine 41. 298-304 (TTTGRPR) is a binding site for substrate. GTP-binding positions include arginine 304, 330–332 (SID), and 412–414 (SVG).

Belongs to the adenylosuccinate synthetase family. As to quaternary structure, homodimer. Requires Mg(2+) as cofactor.

The protein resides in the cytoplasm. It catalyses the reaction IMP + L-aspartate + GTP = N(6)-(1,2-dicarboxyethyl)-AMP + GDP + phosphate + 2 H(+). It functions in the pathway purine metabolism; AMP biosynthesis via de novo pathway; AMP from IMP: step 1/2. Its function is as follows. Plays an important role in the de novo pathway of purine nucleotide biosynthesis. Catalyzes the first committed step in the biosynthesis of AMP from IMP. This Bacillus cereus (strain ATCC 10987 / NRS 248) protein is Adenylosuccinate synthetase.